The chain runs to 404 residues: Cysteine desulfurase IscS (404 aa).

Residues 75 to 76 (AT), Asn155, Gln183, and 203 to 205 (SGH) contribute to the pyridoxal 5'-phosphate site. At Lys206 the chain carries N6-(pyridoxal phosphate)lysine. Thr243 is a binding site for pyridoxal 5'-phosphate. Cys328 (cysteine persulfide intermediate) is an active-site residue. Cys328 provides a ligand contact to [2Fe-2S] cluster.

Belongs to the class-V pyridoxal-phosphate-dependent aminotransferase family. NifS/IscS subfamily. Homodimer. Forms a heterotetramer with IscU, interacts with other sulfur acceptors. The cofactor is pyridoxal 5'-phosphate.

The protein localises to the cytoplasm. It carries out the reaction (sulfur carrier)-H + L-cysteine = (sulfur carrier)-SH + L-alanine. Its pathway is cofactor biosynthesis; iron-sulfur cluster biosynthesis. In terms of biological role, master enzyme that delivers sulfur to a number of partners involved in Fe-S cluster assembly, tRNA modification or cofactor biosynthesis. Catalyzes the removal of elemental sulfur atoms from cysteine to produce alanine. Functions as a sulfur delivery protein for Fe-S cluster synthesis onto IscU, an Fe-S scaffold assembly protein, as well as other S acceptor proteins. This is Cysteine desulfurase IscS from Shewanella oneidensis (strain ATCC 700550 / JCM 31522 / CIP 106686 / LMG 19005 / NCIMB 14063 / MR-1).